A 323-amino-acid chain; its full sequence is ATP synthase gamma chain (323 aa).

It belongs to the ATPase gamma chain family. In terms of assembly, F-type ATPases have 2 components, CF(1) - the catalytic core - and CF(0) - the membrane proton channel. CF(1) has five subunits: alpha(3), beta(3), gamma(1), delta(1), epsilon(1). CF(0) has three main subunits: a, b and c.

The protein resides in the cell membrane. Its function is as follows. Produces ATP from ADP in the presence of a proton gradient across the membrane. The gamma chain is believed to be important in regulating ATPase activity and the flow of protons through the CF(0) complex. This Nocardia farcinica (strain IFM 10152) protein is ATP synthase gamma chain.